A 610-amino-acid polypeptide reads, in one-letter code: Dihydroxy-acid dehydratase (610 aa).

Aspartate 81 contacts Mg(2+). A [2Fe-2S] cluster-binding site is contributed by cysteine 122. Positions 123 and 124 each coordinate Mg(2+). The residue at position 124 (lysine 124) is an N6-carboxylysine. Position 193 (cysteine 193) interacts with [2Fe-2S] cluster. Glutamate 489 is a binding site for Mg(2+). Serine 515 acts as the Proton acceptor in catalysis.

It belongs to the IlvD/Edd family. In terms of assembly, homodimer. [2Fe-2S] cluster is required as a cofactor. Requires Mg(2+) as cofactor.

The enzyme catalyses (2R)-2,3-dihydroxy-3-methylbutanoate = 3-methyl-2-oxobutanoate + H2O. The catalysed reaction is (2R,3R)-2,3-dihydroxy-3-methylpentanoate = (S)-3-methyl-2-oxopentanoate + H2O. The protein operates within amino-acid biosynthesis; L-isoleucine biosynthesis; L-isoleucine from 2-oxobutanoate: step 3/4. It functions in the pathway amino-acid biosynthesis; L-valine biosynthesis; L-valine from pyruvate: step 3/4. Functionally, functions in the biosynthesis of branched-chain amino acids. Catalyzes the dehydration of (2R,3R)-2,3-dihydroxy-3-methylpentanoate (2,3-dihydroxy-3-methylvalerate) into 2-oxo-3-methylpentanoate (2-oxo-3-methylvalerate) and of (2R)-2,3-dihydroxy-3-methylbutanoate (2,3-dihydroxyisovalerate) into 2-oxo-3-methylbutanoate (2-oxoisovalerate), the penultimate precursor to L-isoleucine and L-valine, respectively. This is Dihydroxy-acid dehydratase from Xylella fastidiosa (strain M23).